The sequence spans 70 residues: MLVFYALLFVSVFSSTVMGATIDKPILREAIEEIDVNKRAKNPYCKEENCPPGKHCPKVPIACVYGPCCF.

An N-terminal signal peptide occupies residues 1–19; it reads MLVFYALLFVSVFSSTVMG. Residues 20-39 constitute a propeptide that is removed on maturation; the sequence is ATIDKPILREAIEEIDVNKR.

This sequence belongs to the scoloptoxin-07 family. Post-translationally, contains 3 disulfide bonds. Expressed by the venom gland.

It localises to the secreted. Inhibits voltage-gated potassium channels. This Scolopendra mutilans (Chinese red-headed centipede) protein is Kappa-scoloptoxin(07)-Ssm2b.